We begin with the raw amino-acid sequence, 138 residues long: Lutropin subunit beta (138 aa).

Residues 1 to 17 (LQGLLLWLLLSVGGVWA) form the signal peptide. Disulfide bonds link cysteine 26–cysteine 74, cysteine 40–cysteine 89, cysteine 43–cysteine 127, cysteine 51–cysteine 105, cysteine 55–cysteine 107, and cysteine 110–cysteine 117. Asparagine 30 is a glycosylation site (N-linked (GlcNAc...) asparagine).

Belongs to the glycoprotein hormones subunit beta family. In terms of assembly, heterodimer of a common alpha chain and a unique beta chain which confers biological specificity to thyrotropin, lutropin, follitropin and gonadotropin.

Its subcellular location is the secreted. In terms of biological role, promotes spermatogenesis and ovulation by stimulating the testes and ovaries to synthesize steroids. The polypeptide is Lutropin subunit beta (LHB) (Canis lupus familiaris (Dog)).